The primary structure comprises 396 residues: 1-deoxy-D-xylulose 5-phosphate reductoisomerase (396 aa).

NADPH contacts are provided by threonine 10, glycine 11, serine 12, isoleucine 13, glutamine 38, and asparagine 124. Lysine 125 is a 1-deoxy-D-xylulose 5-phosphate binding site. Glutamate 126 lines the NADPH pocket. Mn(2+) is bound at residue aspartate 150. 4 residues coordinate 1-deoxy-D-xylulose 5-phosphate: serine 151, glutamate 152, serine 179, and histidine 202. Residue glutamate 152 participates in Mn(2+) binding. Residue glycine 208 coordinates NADPH. Residues serine 215, asparagine 220, lysine 221, and glutamate 224 each contribute to the 1-deoxy-D-xylulose 5-phosphate site. Mn(2+) is bound at residue glutamate 224.

The protein belongs to the DXR family. It depends on Mg(2+) as a cofactor. Mn(2+) is required as a cofactor.

The enzyme catalyses 2-C-methyl-D-erythritol 4-phosphate + NADP(+) = 1-deoxy-D-xylulose 5-phosphate + NADPH + H(+). It participates in isoprenoid biosynthesis; isopentenyl diphosphate biosynthesis via DXP pathway; isopentenyl diphosphate from 1-deoxy-D-xylulose 5-phosphate: step 1/6. Catalyzes the NADPH-dependent rearrangement and reduction of 1-deoxy-D-xylulose-5-phosphate (DXP) to 2-C-methyl-D-erythritol 4-phosphate (MEP). In Ralstonia pickettii (strain 12J), this protein is 1-deoxy-D-xylulose 5-phosphate reductoisomerase.